Here is a 180-residue protein sequence, read N- to C-terminus: Crossover junction endodeoxyribonuclease RuvC (180 aa).

Catalysis depends on residues Asp-7, Glu-66, and Asp-138. 3 residues coordinate Mg(2+): Asp-7, Glu-66, and Asp-138.

This sequence belongs to the RuvC family. In terms of assembly, homodimer which binds Holliday junction (HJ) DNA. The HJ becomes 2-fold symmetrical on binding to RuvC with unstacked arms; it has a different conformation from HJ DNA in complex with RuvA. In the full resolvosome a probable DNA-RuvA(4)-RuvB(12)-RuvC(2) complex forms which resolves the HJ. It depends on Mg(2+) as a cofactor.

The protein resides in the cytoplasm. The enzyme catalyses Endonucleolytic cleavage at a junction such as a reciprocal single-stranded crossover between two homologous DNA duplexes (Holliday junction).. In terms of biological role, the RuvA-RuvB-RuvC complex processes Holliday junction (HJ) DNA during genetic recombination and DNA repair. Endonuclease that resolves HJ intermediates. Cleaves cruciform DNA by making single-stranded nicks across the HJ at symmetrical positions within the homologous arms, yielding a 5'-phosphate and a 3'-hydroxyl group; requires a central core of homology in the junction. The consensus cleavage sequence is 5'-(A/T)TT(C/G)-3'. Cleavage occurs on the 3'-side of the TT dinucleotide at the point of strand exchange. HJ branch migration catalyzed by RuvA-RuvB allows RuvC to scan DNA until it finds its consensus sequence, where it cleaves and resolves the cruciform DNA. This Burkholderia orbicola (strain AU 1054) protein is Crossover junction endodeoxyribonuclease RuvC.